The following is a 133-amino-acid chain: MARKKEFKYRGYTFEELINMSLEDLSKLLPSRQRRSLKRGLTPEQKKLLRKIRLAKKGKYKKPIRTHSRDMVILPEMVGMMIYVHNGKEFVPVQIREEMIGHYIGEFALTRKRVQHGSPGVGATRSSMFVAIK.

It belongs to the universal ribosomal protein uS19 family.

In terms of biological role, protein S19 forms a complex with S13 that binds strongly to the 16S ribosomal RNA. This is Small ribosomal subunit protein uS19 from Thermococcus sibiricus (strain DSM 12597 / MM 739).